The primary structure comprises 156 residues: Small ribosomal subunit protein uS7 (156 aa).

The protein belongs to the universal ribosomal protein uS7 family. As to quaternary structure, part of the 30S ribosomal subunit. Contacts proteins S9 and S11.

One of the primary rRNA binding proteins, it binds directly to 16S rRNA where it nucleates assembly of the head domain of the 30S subunit. Is located at the subunit interface close to the decoding center, probably blocks exit of the E-site tRNA. This chain is Small ribosomal subunit protein uS7, found in Thiobacillus denitrificans (strain ATCC 25259 / T1).